A 598-amino-acid chain; its full sequence is Elongation factor 4 (598 aa).

A tr-type G domain is found at 4–181 (KKIRNFAIIA…AIVNLIPPPQ (178 aa)). GTP-binding positions include 16–21 (DHGKST) and 128–131 (NKID).

Belongs to the TRAFAC class translation factor GTPase superfamily. Classic translation factor GTPase family. LepA subfamily.

It localises to the cell membrane. It carries out the reaction GTP + H2O = GDP + phosphate + H(+). In terms of biological role, required for accurate and efficient protein synthesis under certain stress conditions. May act as a fidelity factor of the translation reaction, by catalyzing a one-codon backward translocation of tRNAs on improperly translocated ribosomes. Back-translocation proceeds from a post-translocation (POST) complex to a pre-translocation (PRE) complex, thus giving elongation factor G a second chance to translocate the tRNAs correctly. Binds to ribosomes in a GTP-dependent manner. The chain is Elongation factor 4 from Mesomycoplasma hyopneumoniae (strain 232) (Mycoplasma hyopneumoniae).